A 71-amino-acid chain; its full sequence is Biotinylated protein TB7.3 (71 aa).

The Biotinyl-binding domain occupies 2 to 71; sequence AEDVRAEIVA…QAGDLIAVIS (70 aa). Lys-37 is subject to N6-biotinyllysine.

The sequence is that of Biotinylated protein TB7.3 from Mycobacterium bovis (strain ATCC BAA-935 / AF2122/97).